Here is a 261-residue protein sequence, read N- to C-terminus: Cytochrome c oxidase subunit 3 (261 aa).

Over 1-15 (MTHQTHAYHMVNPSP) the chain is Mitochondrial matrix. Residues 16–34 (WPLTGALSALLMTSGLIMW) traverse the membrane as a helical segment. Residues 35–40 (FHFNST) lie on the Mitochondrial intermembrane side of the membrane. The helical transmembrane segment at 41-66 (TLLMLGLTTNMLTMYQWWRDVIREST) threads the bilayer. Topologically, residues 67 to 72 (FQGHHT) are mitochondrial matrix. The chain crosses the membrane as a helical span at residues 73–105 (PNVQKGLRYGMILFIISEVLFFTGFFWAFYHSS). At 106–128 (LAPTPELGGCWPPTGINPLNPLE) the chain is on the mitochondrial intermembrane side. The helical transmembrane segment at 129–152 (VPLLNTSVLLASGVSITWAHHSLM) threads the bilayer. Residues 153 to 155 (EGN) are Mitochondrial matrix-facing. Residues 156-183 (RNHMLQALFITIALGVYFTLLQASEYYE) traverse the membrane as a helical segment. Residues 184–190 (APFTISD) lie on the Mitochondrial intermembrane side of the membrane. The helical transmembrane segment at 191–223 (GVYGSTFFVATGFHGLHVIIGSTFLIVCFFRQL) threads the bilayer. The Mitochondrial matrix portion of the chain corresponds to 224–232 (KFHFTSNHH). The helical transmembrane segment at 233–256 (FGFEAAAWYWHFVDVVWLFLYVSI) threads the bilayer. The Mitochondrial intermembrane segment spans residues 257–261 (YWWGS).

This sequence belongs to the cytochrome c oxidase subunit 3 family. As to quaternary structure, component of the cytochrome c oxidase (complex IV, CIV), a multisubunit enzyme composed of 14 subunits. The complex is composed of a catalytic core of 3 subunits MT-CO1, MT-CO2 and MT-CO3, encoded in the mitochondrial DNA, and 11 supernumerary subunits COX4I, COX5A, COX5B, COX6A, COX6B, COX6C, COX7A, COX7B, COX7C, COX8 and NDUFA4, which are encoded in the nuclear genome. The complex exists as a monomer or a dimer and forms supercomplexes (SCs) in the inner mitochondrial membrane with NADH-ubiquinone oxidoreductase (complex I, CI) and ubiquinol-cytochrome c oxidoreductase (cytochrome b-c1 complex, complex III, CIII), resulting in different assemblies (supercomplex SCI(1)III(2)IV(1) and megacomplex MCI(2)III(2)IV(2)).

The protein resides in the mitochondrion inner membrane. It carries out the reaction 4 Fe(II)-[cytochrome c] + O2 + 8 H(+)(in) = 4 Fe(III)-[cytochrome c] + 2 H2O + 4 H(+)(out). Functionally, component of the cytochrome c oxidase, the last enzyme in the mitochondrial electron transport chain which drives oxidative phosphorylation. The respiratory chain contains 3 multisubunit complexes succinate dehydrogenase (complex II, CII), ubiquinol-cytochrome c oxidoreductase (cytochrome b-c1 complex, complex III, CIII) and cytochrome c oxidase (complex IV, CIV), that cooperate to transfer electrons derived from NADH and succinate to molecular oxygen, creating an electrochemical gradient over the inner membrane that drives transmembrane transport and the ATP synthase. Cytochrome c oxidase is the component of the respiratory chain that catalyzes the reduction of oxygen to water. Electrons originating from reduced cytochrome c in the intermembrane space (IMS) are transferred via the dinuclear copper A center (CU(A)) of subunit 2 and heme A of subunit 1 to the active site in subunit 1, a binuclear center (BNC) formed by heme A3 and copper B (CU(B)). The BNC reduces molecular oxygen to 2 water molecules using 4 electrons from cytochrome c in the IMS and 4 protons from the mitochondrial matrix. The sequence is that of Cytochrome c oxidase subunit 3 (MT-CO3) from Gazella subgutturosa (Goitred gazelle).